Here is a 1184-residue protein sequence, read N- to C-terminus: Probable phospholipid-transporting ATPase 12 (1184 aa).

Topologically, residues 1-75 are cytoplasmic; sequence MATVSGRRRK…TTKYTLATFL (75 aa). The chain crosses the membrane as a helical span at residues 76–97; sequence PKSLFEQFRRVANFYFLVVGIL. Topologically, residues 98 to 101 are extracellular; the sequence is SFTP. The chain crosses the membrane as a helical span at residues 102-124; it reads LAPYTAVSAIVPLTFVILATMFK. Over 125–306 the chain is Cytoplasmic; that stretch reads EGVEDWRRKQ…SMIERKMDKI (182 aa). A helical membrane pass occupies residues 307 to 328; sequence IYLMFLMVFSLAFFGSVLFGIW. Over 329–364 the chain is Extracellular; sequence TRDDFQNGVMERWYLKPDDSSIFFDPKRAPMAAIYH. The helical transmembrane segment at 365-382 threads the bilayer; it reads FLTALMLNSYFIPISLYV. Topologically, residues 383-921 are cytoplasmic; it reads SIEIVKVLQS…HGHWCYRRIS (539 aa). The active-site 4-aspartylphosphate intermediate is the Asp-430. 2 residues coordinate Mg(2+): Asp-866 and Asp-870. A helical membrane pass occupies residues 922–941; the sequence is KMICYFFYKNITFGFTLFLY. The Extracellular segment spans residues 942 to 955; the sequence is EAYTSFSATPAYND. The chain crosses the membrane as a helical span at residues 956-975; the sequence is WYLSLYSVFFTSLPVICLGI. Topologically, residues 976 to 1005 are cytoplasmic; that stretch reads FDQDVSAPFCLKFPVLYQEGVQNLLFSWRR. The chain crosses the membrane as a helical span at residues 1006–1028; it reads ILSWMFHGFCSAIIIFFLCKTSL. Topologically, residues 1029 to 1041 are extracellular; the sequence is ESQAFNHEGKTAG. A helical transmembrane segment spans residues 1042–1064; that stretch reads RDILGGTMYTCVVWVVSLQMVLT. Residues 1065-1070 are Cytoplasmic-facing; that stretch reads ISYFTL. Residues 1071–1091 traverse the membrane as a helical segment; sequence IQHVVVWGSVVIWYLFLMVYG. Residues 1092–1108 are Extracellular-facing; the sequence is SLPIRMSTDAYMVFLEA. The chain crosses the membrane as a helical span at residues 1109–1133; it reads LAPAPSYWITTLFVVLSTMMPYFIF. At 1134–1184 the chain is on the cytoplasmic side; that stretch reads SAIQMRFFPMSHGTVQLLRYEDQCSNSGNFEMGRQGSVRPTLVMRSHQPES.

This sequence belongs to the cation transport ATPase (P-type) (TC 3.A.3) family. Type IV subfamily.

The protein localises to the membrane. It catalyses the reaction ATP + H2O + phospholipidSide 1 = ADP + phosphate + phospholipidSide 2.. Functionally, involved in transport of phospholipids. This chain is Probable phospholipid-transporting ATPase 12, found in Arabidopsis thaliana (Mouse-ear cress).